A 433-amino-acid chain; its full sequence is Homogentisate 1,2-dioxygenase (433 aa).

H288 functions as the Proton acceptor in the catalytic mechanism. Residues H331 and E337 each contribute to the Fe cation site. Residues Y346 and H367 each contribute to the homogentisate site. H367 contributes to the Fe cation binding site.

This sequence belongs to the homogentisate dioxygenase family. Hexamer; dimer of trimers. Requires Fe cation as cofactor.

It catalyses the reaction homogentisate + O2 = 4-maleylacetoacetate + H(+). Its pathway is amino-acid degradation; L-phenylalanine degradation; acetoacetate and fumarate from L-phenylalanine: step 4/6. Involved in the catabolism of homogentisate (2,5-dihydroxyphenylacetate or 2,5-OH-PhAc), a central intermediate in the degradation of phenylalanine and tyrosine. Catalyzes the oxidative ring cleavage of the ar omatic ring of 2,5-dihydroxyphenylacetate to yield maleylacetoacetate. This chain is Homogentisate 1,2-dioxygenase, found in Pseudomonas putida (strain ATCC 47054 / DSM 6125 / CFBP 8728 / NCIMB 11950 / KT2440).